A 691-amino-acid chain; its full sequence is NADPH--cytochrome P450 reductase (691 aa).

Residues 2 to 7 lie on the Lumenal side of the membrane; the sequence is PFGIDN. A helical membrane pass occupies residues 8-24; sequence TDFTVLAGLVLAVLLYV. The Cytoplasmic segment spans residues 25-691; that stretch reads KRNSIKELLM…TSGRYQEDVW (667 aa). Residues 61–204 form the Flavodoxin-like domain; the sequence is YLVLYASQTG…DYMAWKDSIL (144 aa). FMN contacts are provided by residues 67–72, K78, 116–119, 152–161, and D187; these read SQTGTA, STYG, and LGNSTYEFFN. One can recognise an FAD-binding FR-type domain in the interval 266–529; sequence SQPYIAPIVK…HVRRSNFRLP (264 aa). R285 lines the NADP(+) pocket. Residues 439-442, 457-459, and 476-479 contribute to the FAD site; these read RYYS, TSI, and GVTT. Residues T543, 610–611, 617–621, and D646 contribute to the NADP(+) site; these read SR and KVYVQ. Residue K666 forms a Glycyl lysine isopeptide (Lys-Gly) (interchain with G-Cter in ubiquitin) linkage. W691 is a binding site for FAD.

This sequence belongs to the NADPH--cytochrome P450 reductase family. It in the N-terminal section; belongs to the flavodoxin family. The protein in the C-terminal section; belongs to the flavoprotein pyridine nucleotide cytochrome reductase family. In terms of assembly, interacts with PCL1. The cofactor is FAD. FMN is required as a cofactor. In terms of processing, phosphorylated by the cyclin-CDK PCL1-PHO85.

Its subcellular location is the endoplasmic reticulum membrane. It is found in the mitochondrion outer membrane. It localises to the cell membrane. The catalysed reaction is 2 oxidized [cytochrome P450] + NADPH = 2 reduced [cytochrome P450] + NADP(+) + H(+). Functionally, this enzyme is required for electron transfer from NADP to cytochrome P450 in microsomes. It can also provide electron transfer to heme oxygenase and cytochrome B5. Involved in ergosterol biosynthesis. Has NADPH-dependent ferrireductase activity on the plasma membrane. The sequence is that of NADPH--cytochrome P450 reductase from Saccharomyces cerevisiae (strain ATCC 204508 / S288c) (Baker's yeast).